The primary structure comprises 471 residues: MTSQLAKKAEAWSARFNEPMSDLVKRYTASVFFDKRLALFDIQGSLAHAAMLAKQGIIAEADRAAIEQGMAQIRQEIEAGTFEWKLDLEDVHLNIEARLTAMAGDAGKRLHTGRSRNDQVATDIRLWLRSEIDNIVGLLRALRGALLDLAEQHTNTIVPGFTHLQVAQPVVFGHHLLAYVEMFTRDTERMLDARKRVNRLPLGAAALAGTSYPIDREFVAQQLGFDGVCRNSLDAVSDRDFAIEFCAAAALVMTHISRFSEELVLWMSPRVGFIDIADRFCTGSSIMPQKKNPDVPELARGKTGRVNGHLIGLLTLMKGQPLAYNKDNQEDKEPLFDTVDTVVDTLRIFADMVPGITVKADAMRAAALQGYATATDLADYLVKRGLPFRDAHEAVAHAVRACDDLRCDLADLSVTQLREISGLGDKANLIGDDVHAVLTLEGSVASRNHIGGTAPEQVRLAIVAARAGLAG.

It belongs to the lyase 1 family. Argininosuccinate lyase subfamily.

The protein localises to the cytoplasm. It catalyses the reaction 2-(N(omega)-L-arginino)succinate = fumarate + L-arginine. Its pathway is amino-acid biosynthesis; L-arginine biosynthesis; L-arginine from L-ornithine and carbamoyl phosphate: step 3/3. This chain is Argininosuccinate lyase, found in Ralstonia nicotianae (strain ATCC BAA-1114 / GMI1000) (Ralstonia solanacearum).